We begin with the raw amino-acid sequence, 183 residues long: Ribosome maturation factor RimM (183 aa).

The region spanning 105–181 (ANEYHLMDLI…RIEIDPPLGL (77 aa)) is the PRC barrel domain.

It belongs to the RimM family. As to quaternary structure, binds ribosomal protein uS19.

It is found in the cytoplasm. Its function is as follows. An accessory protein needed during the final step in the assembly of 30S ribosomal subunit, possibly for assembly of the head region. Essential for efficient processing of 16S rRNA. May be needed both before and after RbfA during the maturation of 16S rRNA. It has affinity for free ribosomal 30S subunits but not for 70S ribosomes. The protein is Ribosome maturation factor RimM of Thermosynechococcus vestitus (strain NIES-2133 / IAM M-273 / BP-1).